The following is a 317-amino-acid chain: Methionyl-tRNA formyltransferase (317 aa).

112–115 contacts (6S)-5,6,7,8-tetrahydrofolate; it reads SLLP.

The protein belongs to the Fmt family.

The enzyme catalyses L-methionyl-tRNA(fMet) + (6R)-10-formyltetrahydrofolate = N-formyl-L-methionyl-tRNA(fMet) + (6S)-5,6,7,8-tetrahydrofolate + H(+). Functionally, attaches a formyl group to the free amino group of methionyl-tRNA(fMet). The formyl group appears to play a dual role in the initiator identity of N-formylmethionyl-tRNA by promoting its recognition by IF2 and preventing the misappropriation of this tRNA by the elongation apparatus. This Histophilus somni (strain 129Pt) (Haemophilus somnus) protein is Methionyl-tRNA formyltransferase.